A 394-amino-acid polypeptide reads, in one-letter code: Protein-glutamate methylesterase/protein-glutamine glutaminase of group 2 operon (394 aa).

The 119-residue stretch at 21 to 139 (RVMVVDDSAV…ELTGADTFKR (119 aa)) folds into the Response regulatory domain. A 4-aspartylphosphate modification is found at Asp72. Residues 148–201 (LGAAARRSGPRREGTAAARPPGAAAQPTSGYTLPSPVRAKPETGPLTVRPLPPD) form a disordered region. A compositionally biased stretch (low complexity) spans 162–172 (TAAARPPGAAA). Residues 200 to 382 (PDGRPDVIAI…SAILPLKEIG (183 aa)) form the CheB-type methylesterase domain. Active-site residues include Ser212, His238, and Asp334.

This sequence belongs to the CheB family. Post-translationally, phosphorylated by CheA. Phosphorylation of the N-terminal regulatory domain activates the methylesterase activity.

The protein resides in the cytoplasm. The catalysed reaction is [protein]-L-glutamate 5-O-methyl ester + H2O = L-glutamyl-[protein] + methanol + H(+). It catalyses the reaction L-glutaminyl-[protein] + H2O = L-glutamyl-[protein] + NH4(+). In terms of biological role, involved in chemotaxis. Part of a chemotaxis signal transduction system that modulates chemotaxis in response to various stimuli. Catalyzes the demethylation of specific methylglutamate residues introduced into the chemoreceptors (methyl-accepting chemotaxis proteins or MCP) by CheR. Also mediates the irreversible deamidation of specific glutamine residues to glutamic acid. The sequence is that of Protein-glutamate methylesterase/protein-glutamine glutaminase of group 2 operon from Rhodospirillum centenum (strain ATCC 51521 / SW).